The following is a 235-amino-acid chain: Serine protease SplA (235 aa).

Positions Met-1 to Ala-35 are cleaved as a signal peptide. Catalysis depends on charge relay system residues His-74, Asp-113, and Ser-189.

The protein belongs to the peptidase S1B family.

The protein localises to the secreted. The sequence is that of Serine protease SplA (splA) from Staphylococcus aureus (strain USA300).